A 780-amino-acid polypeptide reads, in one-letter code: Gelsolin (780 aa).

Met-1 carries the N-acetylmethionine; alternate modification. The first 25 residues, 1-25 (MAPYRSSLLCALLLLALCALSPSHA), serve as a signal peptide directing secretion. The actin-severing stretch occupies residues 51–174 (VVEHPEFLKA…YKKGGVASGF (124 aa)). One copy of the Gelsolin-like 1 repeat lies at 74–155 (FDLVPVPPNL…EVQGFESSTF (82 aa)). Tyr-84 carries the post-translational modification Phosphotyrosine. Ca(2+) is bound by residues Gly-90, Asp-91, Glu-122, Asp-134, Gly-139, and Ala-141. The segment at 121-124 (DESG) is actin-actin interfilament contact point. Position 160 to 167 (160 to 167 (KSGLKYKK)) interacts with a 1,2-diacyl-sn-glycero-3-phospho-(1D-myo-inositol-4,5-bisphosphate). Val-170 serves as a coordination point for Ca(2+). 186-194 (RLFQVKGRR) is an a 1,2-diacyl-sn-glycero-3-phospho-(1D-myo-inositol-4,5-bisphosphate) binding site. Residues 196–268 (VRATEVPVSW…SEEGGEPEAM (73 aa)) form a Gelsolin-like 2 repeat. Gly-211 and Asp-212 together coordinate Ca(2+). Residues Cys-213 and Cys-226 are joined by a disulfide bond. Ca(2+) is bound at residue Glu-234. A disordered region spans residues 244-269 (GIRDNERSGRAQVHVSEEGGEPEAML). Ca(2+)-binding residues include Asp-284, Glu-327, Asp-328, and Glu-352. Residues 315–387 (DENPFAQGAL…LPEGGETPLF (73 aa)) form a Gelsolin-like 3 repeat. Tyr-407 and Tyr-463 each carry phosphotyrosine. The interval 432–780 (AAQHGMDDDG…LDRALAELAA (349 aa)) is actin-binding, Ca-sensitive. A Gelsolin-like 4 repeat occupies 453-534 (SNKVPVDPAT…VQGKEPAHLM (82 aa)). 7 residues coordinate Ca(2+): Gly-469, Asp-470, Glu-500, Asp-512, Gly-517, Pro-519, and Thr-549. A Gelsolin-like 5 repeat occupies 575 to 640 (RAVEVMPKSG…EEGSEPDAFW (66 aa)). Lys-582 carries the N6-acetyllysine modification. Ca(2+) is bound by residues Asn-589 and Asp-590. Residue Tyr-601 is modified to Phosphotyrosine. Residue Glu-612 coordinates Ca(2+). Tyr-649 carries the post-translational modification Phosphotyrosine. A Gelsolin-like 6 repeat occupies 679-754 (IEEVPGELMQ…VRQGFEPPSF (76 aa)). Asp-694, Asp-695, and Glu-717 together coordinate Ca(2+). Thr-740 carries the post-translational modification Phosphothreonine.

It belongs to the villin/gelsolin family. Binds to actin and to fibronectin. Identified in a complex composed of ACTA1, COBL, GSN and TMSB4X. Interacts with the inactive form of EIF2AK2/PKR. Interacts with FLII. In terms of processing, phosphorylated on tyrosine residues in vitro.

Its subcellular location is the cytoplasm. It localises to the cytoskeleton. The protein resides in the secreted. Functionally, calcium-regulated, actin-modulating protein that binds to the plus (or barbed) ends of actin monomers or filaments, preventing monomer exchange (end-blocking or capping). It can promote the assembly of monomers into filaments (nucleation) as well as sever filaments already formed. Plays a role in ciliogenesis. The protein is Gelsolin (Gsn) of Mus musculus (Mouse).